The primary structure comprises 792 residues: DEAD-box ATP-dependent RNA helicase 40 (792 aa).

Positions 1–16 are enriched in low complexity; the sequence is MSAGTAPAAPRYAPDD. Disordered regions lie at residues 1-25 and 44-118; these read MSAG…PWRG and TQYE…PLPA. Residues 17 to 51 form the WW domain; sequence PSLPKPWRGLVDGTTGYLYYWNPETNITQYEKPLP. Positions 52–68 are enriched in pro residues; the sequence is PEDQLPPPPPLPPPPPR. Basic and acidic residues-rich tracts occupy residues 70-80 and 88-108; these read GRGDRDRDRRD and PRRD…DHRS. The short motif at 150-178 is the Q motif element; the sequence is TSFETGGFPPEILKEIQRAGFSSPTPIQA. A Helicase ATP-binding domain is found at 181–355; the sequence is WPIALQCQDV…EDLLVHPVQV (175 aa). 194-201 contacts ATP; sequence AKTGSGKT. A DEAD box motif is present at residues 303–306; that stretch reads DEAD. A Helicase C-terminal domain is found at 384-528; that stretch reads RLEQILRSQD…RVPRDLADMA (145 aa). Residues 523–792 form a disordered region; it reads DLADMASRGG…NATVQNGGDN (270 aa). Basic and acidic residues-rich tracts occupy residues 543–560 and 572–588; these read TRSD…RYGG and DSSR…DGRS. 2 stretches are compositionally biased toward basic residues: residues 589-599 and 609-654; these read RRSGRGRSRSR and RSPK…RRHE. Positions 668-708 are enriched in basic and acidic residues; that stretch reads GHGERKRTPEADPSRNHTNHSDPKDDRHPEDGKVGKVDLDR. The segment covering 725–739 has biased composition (polar residues); that stretch reads GKTSRSVSPGNQVEG. Residues 764–777 are compositionally biased toward acidic residues; it reads DEEEGMIDEDGEIA.

Belongs to the DEAD box helicase family. DDX5/DBP2 subfamily.

The protein resides in the nucleus. The catalysed reaction is ATP + H2O = ADP + phosphate + H(+). Its function is as follows. ATP-dependent RNA helicase involved nonsense-mediated mRNA decay and ribosome biogenesis through rRNA processing. The protein is DEAD-box ATP-dependent RNA helicase 40 of Oryza sativa subsp. japonica (Rice).